The following is a 502-amino-acid chain: ATP synthase subunit alpha (502 aa).

The disordered stretch occupies residues 115–139; the sequence is VDGLGPVETTETRPIESPAPGVMDR. 169 to 176 is a binding site for ATP; that stretch reads GDRQTGKT.

This sequence belongs to the ATPase alpha/beta chains family. In terms of assembly, F-type ATPases have 2 components, CF(1) - the catalytic core - and CF(0) - the membrane proton channel. CF(1) has five subunits: alpha(3), beta(3), gamma(1), delta(1), epsilon(1). CF(0) has three main subunits: a(1), b(2) and c(9-12). The alpha and beta chains form an alternating ring which encloses part of the gamma chain. CF(1) is attached to CF(0) by a central stalk formed by the gamma and epsilon chains, while a peripheral stalk is formed by the delta and b chains.

Its subcellular location is the cell membrane. The enzyme catalyses ATP + H2O + 4 H(+)(in) = ADP + phosphate + 5 H(+)(out). Its function is as follows. Produces ATP from ADP in the presence of a proton gradient across the membrane. The alpha chain is a regulatory subunit. This Geobacillus thermodenitrificans (strain NG80-2) protein is ATP synthase subunit alpha.